Consider the following 106-residue polypeptide: Large ribosomal subunit protein uL24 (106 aa).

It belongs to the universal ribosomal protein uL24 family. In terms of assembly, part of the 50S ribosomal subunit.

One of two assembly initiator proteins, it binds directly to the 5'-end of the 23S rRNA, where it nucleates assembly of the 50S subunit. Its function is as follows. One of the proteins that surrounds the polypeptide exit tunnel on the outside of the subunit. The polypeptide is Large ribosomal subunit protein uL24 (Parabacteroides distasonis (strain ATCC 8503 / DSM 20701 / CIP 104284 / JCM 5825 / NCTC 11152)).